Reading from the N-terminus, the 195-residue chain is Putative CheY-P phosphatase CheC1 (195 aa).

Belongs to the CheC family.

Its function is as follows. Catalyzes the dephosphorylation of CheY-P. The chain is Putative CheY-P phosphatase CheC1 (cheC1) from Halobacterium salinarum (strain ATCC 29341 / DSM 671 / R1).